Reading from the N-terminus, the 147-residue chain is uncharacterized protein (147 aa).

A helical membrane pass occupies residues 13 to 35; that stretch reads NSRINLLGILVLNVVCGKSSIFF.

Its subcellular location is the membrane. This is an uncharacterized protein from Saccharomyces cerevisiae (strain ATCC 204508 / S288c) (Baker's yeast).